Reading from the N-terminus, the 763-residue chain is Palmitoyltransferase AKR1 (763 aa).

Polar residues predominate over residues 1–15 (MEDNSEQASVSSQAS). The disordered stretch occupies residues 1-59 (MEDNSEQASVSSQASMRPLVSDNGDREAGAGVEVNIANDNDTSVGVDGENGNEDDDPIL). At 1 to 307 (MEDNSEQASV…KLVKRDDHAK (307 aa)) the chain is on the cytoplasmic side. ANK repeat units lie at residues 57–87 (PILS…NVSS), 92–121 (EGVT…NVES), 126–155 (LEAT…SATT), 159–188 (QGFN…SKGI), 197–226 (KGRT…SVKI), 230–259 (GGFT…DFFQ), and 292–322 (NGYP…GFAF). The chain crosses the membrane as a helical span at residues 308–325 (IITFLIPLLVLGFAFFGF). Topologically, residues 326–330 (SHLHI) are lumenal. Residues 331-348 (LFALPVIILLLLASNKFI) traverse the membrane as a helical segment. At 349–368 (KSFLLPSYETKGTNSASLLK) the chain is on the cytoplasmic side. The chain crosses the membrane as a helical span at residues 369 to 389 (SPLIAGILFGSIFWLAFVWIL). Topologically, residues 390-401 (RILPYTFTKRPL) are lumenal. A helical membrane pass occupies residues 402–422 (GNLTFCAILCFVCYSLFLLAF). Over 423–497 (SDPGHIGSEN…YNDVGLKNHK (75 aa)) the chain is Cytoplasmic. A DHHC domain is found at 454–504 (SFCLETWVRKPLRSKYSYLNDALILRFDHYCPWIYNDVGLKNHKLFIFFIL). Cysteine 484 functions as the S-palmitoyl cysteine intermediate in the catalytic mechanism. Residues 498-518 (LFIFFILALELGIFSFVKVCL) traverse the membrane as a helical segment. The Lumenal portion of the chain corresponds to 519–546 (KYFDELDMDGDCFILGDDDLCSGLIGDR). Residues 547-567 (FTFLIMTWACIQAVWIFSLVI) traverse the membrane as a helical segment. Over 568-763 (VQLFQITKGL…DPLSEIDDMV (196 aa)) the chain is Cytoplasmic.

This sequence belongs to the DHHC palmitoyltransferase family. AKR/ZDHHC17 subfamily.

Its subcellular location is the early endosome membrane. The protein resides in the golgi apparatus membrane. It catalyses the reaction L-cysteinyl-[protein] + hexadecanoyl-CoA = S-hexadecanoyl-L-cysteinyl-[protein] + CoA. Functionally, palmitoyltransferase specific for casein kinase 1. The chain is Palmitoyltransferase AKR1 (AKR1) from Candida glabrata (strain ATCC 2001 / BCRC 20586 / JCM 3761 / NBRC 0622 / NRRL Y-65 / CBS 138) (Yeast).